The following is a 246-amino-acid chain: 5'-nucleotidase SurE (246 aa).

Residues Asp-8, Asp-9, Ser-39, and Asn-91 each contribute to the a divalent metal cation site.

Belongs to the SurE nucleotidase family. A divalent metal cation serves as cofactor.

The protein resides in the cytoplasm. The enzyme catalyses a ribonucleoside 5'-phosphate + H2O = a ribonucleoside + phosphate. In terms of biological role, nucleotidase that shows phosphatase activity on nucleoside 5'-monophosphates. The sequence is that of 5'-nucleotidase SurE from Dechloromonas aromatica (strain RCB).